A 269-amino-acid polypeptide reads, in one-letter code: Indole-3-glycerol phosphate synthase 1 (269 aa).

It belongs to the TrpC family.

The enzyme catalyses 1-(2-carboxyphenylamino)-1-deoxy-D-ribulose 5-phosphate + H(+) = (1S,2R)-1-C-(indol-3-yl)glycerol 3-phosphate + CO2 + H2O. Its pathway is amino-acid biosynthesis; L-tryptophan biosynthesis; L-tryptophan from chorismate: step 4/5. The sequence is that of Indole-3-glycerol phosphate synthase 1 (trpC1) from Streptomyces coelicolor (strain ATCC BAA-471 / A3(2) / M145).